A 146-amino-acid chain; its full sequence is UPF0735 ACT domain-containing protein TTE2621 (146 aa).

The region spanning 71-146 (TFSMVLEHMP…GVRKIEVLGE (76 aa)) is the ACT domain.

The protein belongs to the UPF0735 family.

The protein is UPF0735 ACT domain-containing protein TTE2621 of Caldanaerobacter subterraneus subsp. tengcongensis (strain DSM 15242 / JCM 11007 / NBRC 100824 / MB4) (Thermoanaerobacter tengcongensis).